Reading from the N-terminus, the 1400-residue chain is Macrophage-stimulating protein receptor (1400 aa).

A signal peptide spans Met-1–Gly-24. The Extracellular portion of the chain corresponds to Glu-25 to Thr-957. In terms of domain architecture, Sema spans Arg-31 to Ile-522. A glycan (N-linked (GlcNAc...) asparagine) is linked at Asn-66. Cystine bridges form between Cys-101–Cys-104, Cys-107–Cys-162, Cys-135–Cys-143, Cys-174–Cys-177, Cys-300–Cys-367, Cys-385–Cys-407, and Cys-386–Cys-422. N-linked (GlcNAc...) asparagine glycans are attached at residues Asn-419, Asn-458, and Asn-488. Cystine bridges form between Cys-527–Cys-545, Cys-533–Cys-567, Cys-536–Cys-552, and Cys-548–Cys-558. 3 IPT/TIG domains span residues Pro-569–Asp-671, Pro-684–Arg-767, and Pro-770–Leu-860. N-linked (GlcNAc...) asparagine glycans are attached at residues Asn-654, Asn-720, Asn-841, and Asn-897. Residues Leu-958–Phe-978 traverse the membrane as a helical segment. The Cytoplasmic segment spans residues Ser-979–Thr-1400. The Protein kinase domain maps to Thr-1082–Val-1345. Residues Ile-1088–Val-1096, Lys-1114, and Leu-1161–Met-1164 contribute to the ATP site. Asp-1208 (proton acceptor) is an active-site residue. Arg-1212 serves as a coordination point for ATP. Phosphotyrosine; by autocatalysis occurs at positions 1238, 1239, 1353, and 1360. A disordered region spans residues Thr-1367–Thr-1400.

This sequence belongs to the protein kinase superfamily. Tyr protein kinase family. In terms of assembly, heterodimer of an alpha chain and a beta chain which are disulfide linked. Binds PLXNB1. Associates with and is negatively regulated by HYAL2. Interacts when phosphorylated with downstream effectors including PIK3R1, PCLG1, GRB2 and GAB1. Interacts with integrin beta1/ITGB1 in a ligand-independent fashion. Post-translationally, proteolytic processing yields the two subunits. Autophosphorylated in response to ligand binding on Tyr-1238 and Tyr-1239 in the kinase domain leading to further phosphorylation of Tyr-1353 and Tyr-1360 in the C-terminal multifunctional docking site. In terms of processing, ubiquitinated. Ubiquitination by CBL regulates the receptor stability and activity through proteasomal degradation. Post-translationally, O-mannosylation of IPT/TIG domains on Thr or Ser residues by TMEM260 is required for protein maturation. O-mannosylated residues are composed of single mannose glycans that are not elongated or modified. In terms of tissue distribution, expressed in colon, skin, lung and bone marrow.

It localises to the membrane. The catalysed reaction is L-tyrosyl-[protein] + ATP = O-phospho-L-tyrosyl-[protein] + ADP + H(+). Its activity is regulated as follows. In its inactive state, the C-terminal tail interacts with the catalytic domain and inhibits the kinase activity. Upon ligand binding, the C-terminal tail is displaced and becomes phosphorylated, thus increasing the kinase activity. Its function is as follows. Receptor tyrosine kinase that transduces signals from the extracellular matrix into the cytoplasm by binding to MST1 ligand. Regulates many physiological processes including cell survival, migration and differentiation. Ligand binding at the cell surface induces autophosphorylation of RON on its intracellular domain that provides docking sites for downstream signaling molecules. Following activation by ligand, interacts with the PI3-kinase subunit PIK3R1, PLCG1 or the adapter GAB1. Recruitment of these downstream effectors by RON leads to the activation of several signaling cascades including the RAS-ERK, PI3 kinase-AKT, or PLCgamma-PKC. RON signaling activates the wound healing response by promoting epithelial cell migration, proliferation as well as survival at the wound site. Also plays a role in the innate immune response by regulating the migration and phagocytic activity of macrophages. Alternatively, RON can also promote signals such as cell migration and proliferation in response to growth factors other than MST1 ligand. The protein is Macrophage-stimulating protein receptor (MST1R) of Homo sapiens (Human).